The chain runs to 201 residues: Putative manganese efflux pump MntP 2 (201 aa).

Transmembrane regions (helical) follow at residues 3 to 23 (LISV…VSIT), 39 to 59 (IGLF…SIGI), 65 to 85 (IAAL…GKMI), 116 to 136 (LILL…SFAF), 141 to 161 (IINT…IGVM), and 176 to 196 (ILGG…HTNI).

The protein belongs to the MntP (TC 9.B.29) family.

It is found in the cell membrane. Functionally, probably functions as a manganese efflux pump. The protein is Putative manganese efflux pump MntP 2 of Clostridium botulinum (strain Langeland / NCTC 10281 / Type F).